The sequence spans 160 residues: 2-C-methyl-D-erythritol 2,4-cyclodiphosphate synthase (160 aa).

A divalent metal cation is bound by residues D9 and H11. Residues 9-11 (DVH) and 35-36 (HS) contribute to the 4-CDP-2-C-methyl-D-erythritol 2-phosphate site. H43 is a binding site for a divalent metal cation. Residues 57-59 (DIG), 62-66 (FPDND), and F140 contribute to the 4-CDP-2-C-methyl-D-erythritol 2-phosphate site.

Belongs to the IspF family. Homotrimer. A divalent metal cation is required as a cofactor.

It catalyses the reaction 4-CDP-2-C-methyl-D-erythritol 2-phosphate = 2-C-methyl-D-erythritol 2,4-cyclic diphosphate + CMP. It functions in the pathway isoprenoid biosynthesis; isopentenyl diphosphate biosynthesis via DXP pathway; isopentenyl diphosphate from 1-deoxy-D-xylulose 5-phosphate: step 4/6. In terms of biological role, involved in the biosynthesis of isopentenyl diphosphate (IPP) and dimethylallyl diphosphate (DMAPP), two major building blocks of isoprenoid compounds. Catalyzes the conversion of 4-diphosphocytidyl-2-C-methyl-D-erythritol 2-phosphate (CDP-ME2P) to 2-C-methyl-D-erythritol 2,4-cyclodiphosphate (ME-CPP) with a corresponding release of cytidine 5-monophosphate (CMP). The polypeptide is 2-C-methyl-D-erythritol 2,4-cyclodiphosphate synthase (Fusobacterium nucleatum subsp. nucleatum (strain ATCC 25586 / DSM 15643 / BCRC 10681 / CIP 101130 / JCM 8532 / KCTC 2640 / LMG 13131 / VPI 4355)).